The sequence spans 104 residues: Large ribosomal subunit protein bL21 (104 aa).

The protein belongs to the bacterial ribosomal protein bL21 family. As to quaternary structure, part of the 50S ribosomal subunit. Contacts protein L20.

In terms of biological role, this protein binds to 23S rRNA in the presence of protein L20. This is Large ribosomal subunit protein bL21 from Streptococcus gordonii (strain Challis / ATCC 35105 / BCRC 15272 / CH1 / DL1 / V288).